The chain runs to 541 residues: 2-succinyl-5-enolpyruvyl-6-hydroxy-3-cyclohexene-1-carboxylate synthase (541 aa).

This sequence belongs to the TPP enzyme family. MenD subfamily. Homodimer. Mg(2+) is required as a cofactor. It depends on Mn(2+) as a cofactor. Requires thiamine diphosphate as cofactor.

It carries out the reaction isochorismate + 2-oxoglutarate + H(+) = 5-enolpyruvoyl-6-hydroxy-2-succinyl-cyclohex-3-ene-1-carboxylate + CO2. It participates in quinol/quinone metabolism; 1,4-dihydroxy-2-naphthoate biosynthesis; 1,4-dihydroxy-2-naphthoate from chorismate: step 2/7. The protein operates within quinol/quinone metabolism; menaquinone biosynthesis. Its function is as follows. Catalyzes the thiamine diphosphate-dependent decarboxylation of 2-oxoglutarate and the subsequent addition of the resulting succinic semialdehyde-thiamine pyrophosphate anion to isochorismate to yield 2-succinyl-5-enolpyruvyl-6-hydroxy-3-cyclohexene-1-carboxylate (SEPHCHC). The sequence is that of 2-succinyl-5-enolpyruvyl-6-hydroxy-3-cyclohexene-1-carboxylate synthase from Rhodococcus opacus (strain B4).